We begin with the raw amino-acid sequence, 385 residues long: uncharacterized protein (385 aa).

Zn(2+) contacts are provided by aspartate 180, histidine 258, and histidine 275.

It belongs to the iron-containing alcohol dehydrogenase family. Requires Zn(2+) as cofactor.

This is an uncharacterized protein from Synechocystis sp. (strain ATCC 27184 / PCC 6803 / Kazusa).